A 543-amino-acid polypeptide reads, in one-letter code: CTP synthase (543 aa).

Residues 1 to 265 form an amidoligase domain region; sequence MARYIFITGG…DDEVLAAFAI (265 aa). A CTP-binding site is contributed by serine 13. Position 13 (serine 13) interacts with UTP. 14–19 is an ATP binding site; the sequence is SLGKGL. An L-glutamine-binding site is contributed by tyrosine 54. Aspartate 71 lines the ATP pocket. Mg(2+)-binding residues include aspartate 71 and glutamate 139. Residues 146-148, 186-191, and lysine 222 each bind CTP; these read DIE and KTKPTQ. UTP-binding positions include 186–191 and lysine 222; that span reads KTKPTQ. 238 to 240 is an ATP binding site; the sequence is RDA. The Glutamine amidotransferase type-1 domain maps to 291–542; it reads TIAIVGKYTG…VQAALVQSRL (252 aa). Glycine 353 provides a ligand contact to L-glutamine. Cysteine 380 serves as the catalytic Nucleophile; for glutamine hydrolysis. L-glutamine contacts are provided by residues 381-384, glutamate 404, and arginine 470; that span reads FGMQ. Catalysis depends on residues histidine 515 and glutamate 517.

Belongs to the CTP synthase family. Homotetramer.

It catalyses the reaction UTP + L-glutamine + ATP + H2O = CTP + L-glutamate + ADP + phosphate + 2 H(+). The catalysed reaction is L-glutamine + H2O = L-glutamate + NH4(+). The enzyme catalyses UTP + NH4(+) + ATP = CTP + ADP + phosphate + 2 H(+). Its pathway is pyrimidine metabolism; CTP biosynthesis via de novo pathway; CTP from UDP: step 2/2. With respect to regulation, allosterically activated by GTP, when glutamine is the substrate; GTP has no effect on the reaction when ammonia is the substrate. The allosteric effector GTP functions by stabilizing the protein conformation that binds the tetrahedral intermediate(s) formed during glutamine hydrolysis. Inhibited by the product CTP, via allosteric rather than competitive inhibition. Its function is as follows. Catalyzes the ATP-dependent amination of UTP to CTP with either L-glutamine or ammonia as the source of nitrogen. Regulates intracellular CTP levels through interactions with the four ribonucleotide triphosphates. This is CTP synthase from Rhodopseudomonas palustris (strain ATCC BAA-98 / CGA009).